The sequence spans 193 residues: Thioredoxin reductase-like selenoprotein T1b (193 aa).

An N-terminal signal peptide occupies residues 1–21 (METRCLYLLLVCVLSVNHATA). Residues 44–47 (CVSU) constitute a cross-link (cysteinyl-selenocysteine (Cys-Sec)). Residue selenocysteine 47 is a non-standard amino acid, selenocysteine.

Belongs to the SelWTH family. Selenoprotein T subfamily. Post-translationally, may contain a selenide-sulfide bond between Cys-44 and Sec-47. This bond is speculated to serve as redox-active pair. As to expression, widely expressed in the embryo. High level in embryonic blood at 24 hours post-fertilization (hpf).

The protein resides in the endoplasmic reticulum membrane. It catalyses the reaction [thioredoxin]-dithiol + NADP(+) = [thioredoxin]-disulfide + NADPH + H(+). In terms of biological role, selenoprotein with thioredoxin reductase-like oxidoreductase activity. The sequence is that of Thioredoxin reductase-like selenoprotein T1b from Danio rerio (Zebrafish).